The following is a 247-amino-acid chain: Carboxy-S-adenosyl-L-methionine synthase (247 aa).

S-adenosyl-L-methionine contacts are provided by residues Tyr-39, 64-66, 89-90, 117-118, Asn-132, and Arg-199; these read GCS, DN, and DI.

Belongs to the class I-like SAM-binding methyltransferase superfamily. Cx-SAM synthase family. As to quaternary structure, homodimer.

The catalysed reaction is prephenate + S-adenosyl-L-methionine = carboxy-S-adenosyl-L-methionine + 3-phenylpyruvate + H2O. Catalyzes the conversion of S-adenosyl-L-methionine (SAM) to carboxy-S-adenosyl-L-methionine (Cx-SAM). The protein is Carboxy-S-adenosyl-L-methionine synthase of Escherichia coli O139:H28 (strain E24377A / ETEC).